The primary structure comprises 290 residues: Sodium/potassium-transporting ATPase subunit beta-2 (290 aa).

Over 1–39 (MVIQKEKKSCGQVVEEWKEFVWNPRTHQFMGRTGTSWAF) the chain is Cytoplasmic. A helical; Signal-anchor for type II membrane protein transmembrane segment spans residues 40-67 (ILLFYLVFYGFLTAMFTLTMWVMLQTVS). Residues 68-290 (DHTPKYQDRL…VAFKLRINKA (223 aa)) lie on the Extracellular side of the membrane. N-linked (GlcNAc...) asparagine glycans are attached at residues Asn-96 and Asn-118. Cys-129 and Cys-150 form a disulfide bridge. N-linked (GlcNAc...) asparagine glycosylation is found at Asn-153 and Asn-159. Cys-160 and Cys-177 are joined by a disulfide. Asn-193, Asn-197, and Asn-238 each carry an N-linked (GlcNAc...) asparagine glycan. Residues 193–290 (NQSMNVTCVG…VAFKLRINKA (98 aa)) are immunoglobulin-like. Cys-200 and Cys-261 are oxidised to a cystine.

It belongs to the X(+)/potassium ATPases subunit beta family. As to quaternary structure, the sodium/potassium-transporting ATPase is composed of a catalytic alpha subunit, an auxiliary non-catalytic beta subunit and an additional regulatory subunit. Interacts with isoform 2 of BSG. In terms of tissue distribution, highly expressed in brain (at protein level).

The protein localises to the cell membrane. In terms of biological role, this is the non-catalytic component of the active enzyme, which catalyzes the hydrolysis of ATP coupled with the exchange of Na(+) and K(+) ions across the plasma membrane. The exact function of the beta-2 subunit is not known. Mediates cell adhesion of neurons and astrocytes, and promotes neurite outgrowth. The sequence is that of Sodium/potassium-transporting ATPase subunit beta-2 (Atp1b2) from Rattus norvegicus (Rat).